Consider the following 425-residue polypeptide: D-amino acid dehydrogenase (425 aa).

3-17 lines the FAD pocket; that stretch reads VLVMGAGVIGVTTAY.

It belongs to the DadA oxidoreductase family. Requires FAD as cofactor.

It catalyses the reaction a D-alpha-amino acid + A + H2O = a 2-oxocarboxylate + AH2 + NH4(+). It functions in the pathway amino-acid degradation; D-alanine degradation; NH(3) and pyruvate from D-alanine: step 1/1. Functionally, oxidative deamination of D-amino acids. The protein is D-amino acid dehydrogenase of Rhodopseudomonas palustris (strain HaA2).